The following is a 319-amino-acid chain: Tryptophan--tRNA ligase (319 aa).

Residues 8–10 (QPS) and 16–17 (GN) contribute to the ATP site. A 'HIGH' region motif is present at residues 9–17 (PSGDLHIGN). Residue Asp-131 coordinates L-tryptophan. ATP contacts are provided by residues 143–145 (GKD), Val-182, and 189–193 (KMSKS). Residues 189–193 (KMSKS) carry the 'KMSKS' region motif.

This sequence belongs to the class-I aminoacyl-tRNA synthetase family. In terms of assembly, homodimer.

The protein localises to the cytoplasm. The catalysed reaction is tRNA(Trp) + L-tryptophan + ATP = L-tryptophyl-tRNA(Trp) + AMP + diphosphate + H(+). Its function is as follows. Catalyzes the attachment of tryptophan to tRNA(Trp). In Campylobacter jejuni subsp. jejuni serotype O:2 (strain ATCC 700819 / NCTC 11168), this protein is Tryptophan--tRNA ligase.